A 337-amino-acid chain; its full sequence is Glyceraldehyde-3-phosphate dehydrogenase 1 (337 aa).

Residues 12 to 13 (RI), Asp34, and Arg79 contribute to the NAD(+) site. D-glyceraldehyde 3-phosphate is bound by residues 150 to 152 (SCT), Thr181, 210 to 211 (TG), and Arg233. Cys151 (nucleophile) is an active-site residue. Residue Asn315 participates in NAD(+) binding.

Belongs to the glyceraldehyde-3-phosphate dehydrogenase family. As to quaternary structure, homotetramer.

The protein resides in the cytoplasm. The enzyme catalyses D-glyceraldehyde 3-phosphate + phosphate + NAD(+) = (2R)-3-phospho-glyceroyl phosphate + NADH + H(+). It participates in carbohydrate degradation; glycolysis; pyruvate from D-glyceraldehyde 3-phosphate: step 1/5. In Mucor circinelloides f. lusitanicus (Mucor racemosus var. lusitanicus), this protein is Glyceraldehyde-3-phosphate dehydrogenase 1 (GPD1).